The chain runs to 303 residues: Bifunctional protein FolD (303 aa).

Residues 165–167 (GRS), Ser-190, and Ile-231 contribute to the NADP(+) site.

Belongs to the tetrahydrofolate dehydrogenase/cyclohydrolase family. In terms of assembly, homodimer.

The catalysed reaction is (6R)-5,10-methylene-5,6,7,8-tetrahydrofolate + NADP(+) = (6R)-5,10-methenyltetrahydrofolate + NADPH. The enzyme catalyses (6R)-5,10-methenyltetrahydrofolate + H2O = (6R)-10-formyltetrahydrofolate + H(+). It participates in one-carbon metabolism; tetrahydrofolate interconversion. In terms of biological role, catalyzes the oxidation of 5,10-methylenetetrahydrofolate to 5,10-methenyltetrahydrofolate and then the hydrolysis of 5,10-methenyltetrahydrofolate to 10-formyltetrahydrofolate. In Prochlorococcus marinus (strain NATL2A), this protein is Bifunctional protein FolD.